A 156-amino-acid chain; its full sequence is Small ribosomal subunit protein uS7 (156 aa).

It belongs to the universal ribosomal protein uS7 family. As to quaternary structure, part of the 30S ribosomal subunit. Contacts proteins S9 and S11.

One of the primary rRNA binding proteins, it binds directly to 16S rRNA where it nucleates assembly of the head domain of the 30S subunit. Is located at the subunit interface close to the decoding center, probably blocks exit of the E-site tRNA. The sequence is that of Small ribosomal subunit protein uS7 from Acholeplasma laidlawii (strain PG-8A).